The following is a 43-amino-acid chain: Protein PsbN 2 (43 aa).

A helical transmembrane segment spans residues 4-24 (ATILGISIAAALVGITVLALY).

The protein belongs to the PsbN family.

Its subcellular location is the cellular thylakoid membrane. Its function is as follows. May play a role in photosystem I and II biogenesis. The protein is Protein PsbN 2 of Microcystis aeruginosa (strain NIES-843 / IAM M-2473).